The sequence spans 61 residues: MFTMKKPLLLLFFLATINLSLCEQERNAEEERRDEPDERNAEVEKRFLPIVGKLLSGLFGK.

The N-terminal stretch at 1–22 (MFTMKKPLLLLFFLATINLSLC) is a signal peptide. Positions 23 to 44 (EQERNAEEERRDEPDERNAEVE) are cleaved as a propeptide — removed in mature form.

Belongs to the frog skin active peptide (FSAP) family. Temporin subfamily. As to expression, expressed by the skin glands.

It is found in the secreted. Its function is as follows. Antimicrobial peptide active against a variety of Gram-positive bacterial strains but not against Gram-negative bacteria. Has weak antifungal activity against a slime mold isolate. Has weak hemolytic activity against human erythrocytes. The protein is Temporin-CG3 of Amolops chunganensis (Chungan torrent frog).